The primary structure comprises 129 residues: MAKDTGRVKRRERKNITSGVAHVSASFNNTMVTITDAQGNAISWSSAGHMGFKGSRKSTPYAAQMAAEDAGKKAMEHGMKTIEVKVSGPGSGRESALRALQSVGFTITTIQDVTPIPHNGCRPPKRRRV.

The protein belongs to the universal ribosomal protein uS11 family. As to quaternary structure, part of the 30S ribosomal subunit. Interacts with proteins S7 and S18. Binds to IF-3.

Functionally, located on the platform of the 30S subunit, it bridges several disparate RNA helices of the 16S rRNA. Forms part of the Shine-Dalgarno cleft in the 70S ribosome. In Maricaulis maris (strain MCS10) (Caulobacter maris), this protein is Small ribosomal subunit protein uS11.